Reading from the N-terminus, the 967-residue chain is Translation initiation factor IF-2 (967 aa).

Residues 34-363 (ASSTVEPPVA…APAVGGVSVP (330 aa)) form a disordered region. Composition is skewed to low complexity over residues 51–96 (PAGG…GNAA) and 103–154 (ASEA…TPGP). The segment covering 184 to 196 (RSEGGAQRGGPRP) has biased composition (gly residues). Positions 197–206 (GGQQRSGKPG) are enriched in low complexity. The span at 300 to 333 (PRRGGGPGGGPGGGGGFRGRGGRGGTQGAFGRGG) shows a compositional bias: gly residues. A compositionally biased stretch (basic residues) spans 334–345 (ARGKHRKSKRAK). The 173-residue stretch at 460-632 (PRPPVVTVMG…IVLTADGALE (173 aa)) folds into the tr-type G domain. A G1 region spans residues 469–476 (GHVDHGKT). 469-476 (GHVDHGKT) serves as a coordination point for GTP. The interval 494–498 (GITQH) is G2. Residues 519–522 (DTPG) form a G3 region. Residues 519 to 523 (DTPGH) and 573 to 576 (NKVD) each bind GTP. The interval 573-576 (NKVD) is G4. The interval 609–611 (SAR) is G5.

It belongs to the TRAFAC class translation factor GTPase superfamily. Classic translation factor GTPase family. IF-2 subfamily.

It localises to the cytoplasm. Its function is as follows. One of the essential components for the initiation of protein synthesis. Protects formylmethionyl-tRNA from spontaneous hydrolysis and promotes its binding to the 30S ribosomal subunits. Also involved in the hydrolysis of GTP during the formation of the 70S ribosomal complex. The polypeptide is Translation initiation factor IF-2 (Kocuria rhizophila (strain ATCC 9341 / DSM 348 / NBRC 103217 / DC2201)).